The chain runs to 614 residues: Dihydroxy-acid dehydratase 1 (614 aa).

Position 81 (Asp81) interacts with Mg(2+). A [2Fe-2S] cluster-binding site is contributed by Cys122. Asp123 and Lys124 together coordinate Mg(2+). Position 124 is an N6-carboxylysine (Lys124). Position 195 (Cys195) interacts with [2Fe-2S] cluster. Glu491 provides a ligand contact to Mg(2+). The active-site Proton acceptor is Ser517.

It belongs to the IlvD/Edd family. Homodimer. The cofactor is [2Fe-2S] cluster. Mg(2+) serves as cofactor.

The enzyme catalyses (2R)-2,3-dihydroxy-3-methylbutanoate = 3-methyl-2-oxobutanoate + H2O. The catalysed reaction is (2R,3R)-2,3-dihydroxy-3-methylpentanoate = (S)-3-methyl-2-oxopentanoate + H2O. Its pathway is amino-acid biosynthesis; L-isoleucine biosynthesis; L-isoleucine from 2-oxobutanoate: step 3/4. The protein operates within amino-acid biosynthesis; L-valine biosynthesis; L-valine from pyruvate: step 3/4. Functionally, functions in the biosynthesis of branched-chain amino acids. Catalyzes the dehydration of (2R,3R)-2,3-dihydroxy-3-methylpentanoate (2,3-dihydroxy-3-methylvalerate) into 2-oxo-3-methylpentanoate (2-oxo-3-methylvalerate) and of (2R)-2,3-dihydroxy-3-methylbutanoate (2,3-dihydroxyisovalerate) into 2-oxo-3-methylbutanoate (2-oxoisovalerate), the penultimate precursor to L-isoleucine and L-valine, respectively. The chain is Dihydroxy-acid dehydratase 1 from Mesorhizobium japonicum (strain LMG 29417 / CECT 9101 / MAFF 303099) (Mesorhizobium loti (strain MAFF 303099)).